The chain runs to 281 residues: Putative pyruvate, phosphate dikinase regulatory protein (281 aa).

Residue 150–157 participates in ADP binding; that stretch reads GVSRTSKT.

This sequence belongs to the pyruvate, phosphate/water dikinase regulatory protein family. PDRP subfamily.

The enzyme catalyses N(tele)-phospho-L-histidyl/L-threonyl-[pyruvate, phosphate dikinase] + ADP = N(tele)-phospho-L-histidyl/O-phospho-L-threonyl-[pyruvate, phosphate dikinase] + AMP + H(+). It carries out the reaction N(tele)-phospho-L-histidyl/O-phospho-L-threonyl-[pyruvate, phosphate dikinase] + phosphate + H(+) = N(tele)-phospho-L-histidyl/L-threonyl-[pyruvate, phosphate dikinase] + diphosphate. Functionally, bifunctional serine/threonine kinase and phosphorylase involved in the regulation of the pyruvate, phosphate dikinase (PPDK) by catalyzing its phosphorylation/dephosphorylation. The sequence is that of Putative pyruvate, phosphate dikinase regulatory protein from Sorangium cellulosum (strain So ce56) (Polyangium cellulosum (strain So ce56)).